Here is a 154-residue protein sequence, read N- to C-terminus: MTVFEGNLTTGNAKYGIVVARFNEFINAKLLAGALDALKRHGVQEEQIDIAWVPGAFEIPLIAQKMASSDKYDAIICLGTVIRGSTSHYDFVCSEVSKGIAHVSLNSNIPVMFGVLTTENIEQAIERSGTKAGNKGFEVAVGAIEMVDLMAKMS.

5-amino-6-(D-ribitylamino)uracil contacts are provided by residues Phe22, 56–58 (AFE), and 80–82 (TVI). Position 85–86 (85–86 (ST)) interacts with (2S)-2-hydroxy-3-oxobutyl phosphate. His88 serves as the catalytic Proton donor. Phe113 contacts 5-amino-6-(D-ribitylamino)uracil. Residue Arg127 coordinates (2S)-2-hydroxy-3-oxobutyl phosphate.

It belongs to the DMRL synthase family.

The catalysed reaction is (2S)-2-hydroxy-3-oxobutyl phosphate + 5-amino-6-(D-ribitylamino)uracil = 6,7-dimethyl-8-(1-D-ribityl)lumazine + phosphate + 2 H2O + H(+). It functions in the pathway cofactor biosynthesis; riboflavin biosynthesis; riboflavin from 2-hydroxy-3-oxobutyl phosphate and 5-amino-6-(D-ribitylamino)uracil: step 1/2. In terms of biological role, catalyzes the formation of 6,7-dimethyl-8-ribityllumazine by condensation of 5-amino-6-(D-ribitylamino)uracil with 3,4-dihydroxy-2-butanone 4-phosphate. This is the penultimate step in the biosynthesis of riboflavin. This is 6,7-dimethyl-8-ribityllumazine synthase from Lactococcus lactis subsp. cremoris (strain MG1363).